A 438-amino-acid chain; its full sequence is UDP-N-acetylmuramoylalanine--D-glutamate ligase (438 aa).

112-118 contributes to the ATP binding site; that stretch reads GSNGKST.

The protein belongs to the MurCDEF family.

The protein resides in the cytoplasm. It carries out the reaction UDP-N-acetyl-alpha-D-muramoyl-L-alanine + D-glutamate + ATP = UDP-N-acetyl-alpha-D-muramoyl-L-alanyl-D-glutamate + ADP + phosphate + H(+). The protein operates within cell wall biogenesis; peptidoglycan biosynthesis. Functionally, cell wall formation. Catalyzes the addition of glutamate to the nucleotide precursor UDP-N-acetylmuramoyl-L-alanine (UMA). This Salmonella typhimurium (strain LT2 / SGSC1412 / ATCC 700720) protein is UDP-N-acetylmuramoylalanine--D-glutamate ligase.